We begin with the raw amino-acid sequence, 383 residues long: Agmatine deiminase (383 aa).

Agmatine-binding residues include Asp220 and Asp226. Cys366 serves as the catalytic Amidino-cysteine intermediate.

The protein belongs to the agmatine deiminase family. In terms of assembly, forms homodimers.

The catalysed reaction is agmatine + H2O = N-carbamoylputrescine + NH4(+). Its pathway is amine and polyamine biosynthesis; putrescine biosynthesis via agmatine pathway; N-carbamoylputrescine from agmatine: step 1/1. With respect to regulation, inhibited by N-ethylmaleimide and iodoacetamide. In terms of biological role, mediates the hydrolysis of agmatine into N-carbamoylputrescine in the arginine decarboxylase (ADC) pathway of putrescine biosynthesis, a basic polyamine. This chain is Agmatine deiminase (AIH), found in Arabidopsis thaliana (Mouse-ear cress).